The primary structure comprises 157 residues: Hydra actinoporin-like toxin 3 (157 aa).

Residues Leu1–Thr14 form the signal peptide. Positions Ile129 to Gly131 match the Cell attachment site motif.

It belongs to the actinoporin family. HALT subfamily. As to quaternary structure, octamer or nonamer in membranes. Monomer in the soluble state. In vitro, interacts with folate receptor alpha (of target organism).

The protein resides in the nematocyst. Its subcellular location is the secreted. It localises to the target cell membrane. Its function is as follows. Pore-forming protein that forms hydrophilic pores and causes cytolysis. Compared to equinatoxin-2 (AC P61914), it reveals lower cytolysis activity (5-12-fold difference, tested on erythrocytes), a larger pore size (probably 2-3 nm) and different affinity to membrane lipids (100-fold lower affinity to sphingomyelin). Binds to the two sphingolipids, lysophosphatidic acid (LPA) and sphingosine-1-phosphate (S1P). Does not bind (or only weakly) to sulfatides (SFT). Shows cytolytic activity on HeLa cells, with a different potency than its paralogs (from most potent to less potent: HALT-4&gt;HALT-6~HALT-1&gt;HALT-3&gt;HALT-7&gt;HALT-2). Pore formation is a multi-step process that involves specific recognition of membrane lipid by a protein aromatic residues rich region, firm binding to the membrane (mainly driven by hydrophobic interactions) accompanied by the transfer of the N-terminal region to the lipid-water interface and finally pore formation after oligomerization of monomers. In vitro, binds to the folate receptor alpha (FOLR1), a GPI-anchored membrane protein that plays a major role in the uptake of folate/folic acid into cells via endocytosis, suggesting a possible involvement of this receptor in the mechanism of HALT-1-induced cell lysis. In vivo, does not cause visible paralysis in larvae of the blowfly Sarcophaga faculata, the most common arthropod prey of Hydra. The protein is Hydra actinoporin-like toxin 3 of Hydra vulgaris (Hydra).